Here is a 123-residue protein sequence, read N- to C-terminus: Small ribosomal subunit protein bS16 (123 aa).

This sequence belongs to the bacterial ribosomal protein bS16 family.

This Treponema pallidum (strain Nichols) protein is Small ribosomal subunit protein bS16.